The chain runs to 354 residues: Ferrochelatase (354 aa).

Fe cation is bound by residues His-214 and Glu-295.

The protein belongs to the ferrochelatase family.

It is found in the cytoplasm. The catalysed reaction is heme b + 2 H(+) = protoporphyrin IX + Fe(2+). It participates in porphyrin-containing compound metabolism; protoheme biosynthesis; protoheme from protoporphyrin-IX: step 1/1. Its function is as follows. Catalyzes the ferrous insertion into protoporphyrin IX. This chain is Ferrochelatase, found in Burkholderia lata (strain ATCC 17760 / DSM 23089 / LMG 22485 / NCIMB 9086 / R18194 / 383).